The sequence spans 466 residues: 3-isopropylmalate dehydratase large subunit (466 aa).

3 residues coordinate [4Fe-4S] cluster: Cys-347, Cys-407, and Cys-410.

It belongs to the aconitase/IPM isomerase family. LeuC type 1 subfamily. Heterodimer of LeuC and LeuD. Requires [4Fe-4S] cluster as cofactor.

It carries out the reaction (2R,3S)-3-isopropylmalate = (2S)-2-isopropylmalate. It functions in the pathway amino-acid biosynthesis; L-leucine biosynthesis; L-leucine from 3-methyl-2-oxobutanoate: step 2/4. Catalyzes the isomerization between 2-isopropylmalate and 3-isopropylmalate, via the formation of 2-isopropylmaleate. This chain is 3-isopropylmalate dehydratase large subunit, found in Buchnera aphidicola subsp. Thelaxes suberi.